The following is a 298-amino-acid chain: UDP-3-O-acyl-N-acetylglucosamine deacetylase (298 aa).

Zn(2+)-binding residues include histidine 75, histidine 232, and aspartate 236. Histidine 259 acts as the Proton donor in catalysis.

This sequence belongs to the LpxC family. The cofactor is Zn(2+).

It catalyses the reaction a UDP-3-O-[(3R)-3-hydroxyacyl]-N-acetyl-alpha-D-glucosamine + H2O = a UDP-3-O-[(3R)-3-hydroxyacyl]-alpha-D-glucosamine + acetate. The protein operates within glycolipid biosynthesis; lipid IV(A) biosynthesis; lipid IV(A) from (3R)-3-hydroxytetradecanoyl-[acyl-carrier-protein] and UDP-N-acetyl-alpha-D-glucosamine: step 2/6. Its function is as follows. Catalyzes the hydrolysis of UDP-3-O-myristoyl-N-acetylglucosamine to form UDP-3-O-myristoylglucosamine and acetate, the committed step in lipid A biosynthesis. The polypeptide is UDP-3-O-acyl-N-acetylglucosamine deacetylase (Wolinella succinogenes (strain ATCC 29543 / DSM 1740 / CCUG 13145 / JCM 31913 / LMG 7466 / NCTC 11488 / FDC 602W) (Vibrio succinogenes)).